The following is a 368-amino-acid chain: Homoserine O-acetyltransferase (368 aa).

The AB hydrolase-1 domain maps to asparagine 47–leucine 349. Serine 153 (nucleophile) is an active-site residue. Position 221 (arginine 221) interacts with substrate. Active-site residues include aspartate 311 and histidine 344. Aspartate 345 lines the substrate pocket.

Belongs to the AB hydrolase superfamily. MetX family. In terms of assembly, homodimer.

The protein localises to the cytoplasm. The enzyme catalyses L-homoserine + acetyl-CoA = O-acetyl-L-homoserine + CoA. It functions in the pathway amino-acid biosynthesis; L-methionine biosynthesis via de novo pathway; O-acetyl-L-homoserine from L-homoserine: step 1/1. Functionally, transfers an acetyl group from acetyl-CoA to L-homoserine, forming acetyl-L-homoserine. This is Homoserine O-acetyltransferase from Leptospira borgpetersenii serovar Hardjo-bovis (strain JB197).